Reading from the N-terminus, the 374-residue chain is Putative heme chaperone HemW-like protein (374 aa).

In terms of domain architecture, Radical SAM core spans 1 to 231 (MKLLGLYINI…EKLLKKSGYK (231 aa)).

This sequence belongs to the anaerobic coproporphyrinogen-III oxidase family. HemW subfamily.

The protein resides in the cytoplasm. Its function is as follows. Might be a heme chaperone; in E.coli heme binds independently of binding to [4Fe-4S] or S-adenosyl-L-methionine. The protein is Putative heme chaperone HemW-like protein of Buchnera aphidicola subsp. Baizongia pistaciae (strain Bp).